We begin with the raw amino-acid sequence, 120 residues long: NAD(P)H-quinone oxidoreductase subunit 3 (120 aa).

3 consecutive transmembrane segments (helical) span residues 2–22 (FVLT…LVPV), 64–84 (MFAL…PWAV), and 89–109 (LGLL…VALV).

The protein belongs to the complex I subunit 3 family. NDH-1 can be composed of about 15 different subunits; different subcomplexes with different compositions have been identified which probably have different functions.

The protein resides in the cellular thylakoid membrane. It carries out the reaction a plastoquinone + NADH + (n+1) H(+)(in) = a plastoquinol + NAD(+) + n H(+)(out). It catalyses the reaction a plastoquinone + NADPH + (n+1) H(+)(in) = a plastoquinol + NADP(+) + n H(+)(out). NDH-1 shuttles electrons from an unknown electron donor, via FMN and iron-sulfur (Fe-S) centers, to quinones in the respiratory and/or the photosynthetic chain. The immediate electron acceptor for the enzyme in this species is believed to be plastoquinone. Couples the redox reaction to proton translocation, and thus conserves the redox energy in a proton gradient. Cyanobacterial NDH-1 also plays a role in inorganic carbon-concentration. The protein is NAD(P)H-quinone oxidoreductase subunit 3 (ndhC) of Synechocystis sp. (strain ATCC 27184 / PCC 6803 / Kazusa).